Reading from the N-terminus, the 390-residue chain is Transposase for insertion sequence element IS256 in transposon Tn4001 (390 aa).

This sequence belongs to the transposase mutator family.

Required for the transposition of the insertion element. The protein is Transposase for insertion sequence element IS256 in transposon Tn4001 of Enterococcus faecalis (strain ATCC 700802 / V583).